A 500-amino-acid polypeptide reads, in one-letter code: NAD(P)H-quinone oxidoreductase chain 4, chloroplastic (500 aa).

Helical transmembrane passes span 4-24 (FPWL…IFFL), 35-55 (YTIA…CYHF), 87-107 (LGSI…AWPV), 111-131 (SQLF…LFSS), 134-154 (LLLF…LLSM), 167-187 (FILY…GMGL), 211-231 (ILLY…IPLH), 242-262 (HYST…YGLI), 272-292 (AHYL…IYAA), 313-333 (MGFI…GAIL), 334-354 (QILS…TACD), 386-406 (LALP…GLIT), 417-437 (LITF…LSML), and 462-482 (LFLL…PDFV).

The protein belongs to the complex I subunit 4 family.

The protein localises to the plastid. It localises to the chloroplast thylakoid membrane. The enzyme catalyses a plastoquinone + NADH + (n+1) H(+)(in) = a plastoquinol + NAD(+) + n H(+)(out). It catalyses the reaction a plastoquinone + NADPH + (n+1) H(+)(in) = a plastoquinol + NADP(+) + n H(+)(out). The polypeptide is NAD(P)H-quinone oxidoreductase chain 4, chloroplastic (Saccharum officinarum (Sugarcane)).